A 284-amino-acid polypeptide reads, in one-letter code: Serine/arginine-rich splicing factor RS2Z32 (284 aa).

The RRM domain occupies 11–81; the sequence is TRLYVGRLSS…SRITVEASRG (71 aa). Residues 74–97 are disordered; it reads ITVEASRGAPRGSRDNGSRGPPPG. 2 consecutive CCHC-type zinc fingers follow at residues 99 to 116 and 121 to 138; these read GRCFNCGVDGHWARDCTA and NKCYRCGERGHIERNCKN. The interval 132-284 is disordered; that stretch reads IERNCKNSPS…RPSPKGSESP (153 aa). The span at 159–180 shows a compositional bias: basic residues; sequence RSPRRRRSPSRSRSYSRGRSYS. Phosphoserine is present on residues Ser-166, Ser-168, and Ser-184. The segment covering 186 to 203 has biased composition (basic and acidic residues); that stretch reads VRREKSVEDRSRSPKAME. Phosphoserine occurs at positions 205, 207, 214, 216, 225, 235, 255, 265, 277, and 281. Positions 209-236 are enriched in basic and acidic residues; it reads KGRDQSLSPDRKVIDASPKRGSDYDGSP.

Belongs to the splicing factor SR family. RS2Z subfamily. As to quaternary structure, component of the spliceosome. Post-translationally, extensively phosphorylated on serine residues in the RS domain.

Its subcellular location is the nucleus. In terms of biological role, probably involved in intron recognition and spliceosome assembly. The chain is Serine/arginine-rich splicing factor RS2Z32 (RS2Z32) from Arabidopsis thaliana (Mouse-ear cress).